Here is a 583-residue protein sequence, read N- to C-terminus: Alpha-1,3-arabinosyltransferase XAT2 (583 aa).

Topologically, residues 1–21 are cytoplasmic; it reads MKPVERAKLVRSLRQESRRLR. Residues 22-42 form a helical; Signal-anchor for type II membrane protein membrane-spanning segment; that stretch reads LLVLVIGFFLVTLTFVVISKP. The Lumenal segment spans residues 43 to 583; it reads DALLFNLNGR…LLEVLDQLNQ (541 aa). A disordered region spans residues 73–178; sequence RRSADTFPAA…NGKQEDGKPN (106 aa). Composition is skewed to basic and acidic residues over residues 102–121 and 135–146; these read TSEEEKRLLSSEPEQGKNEE and EDNKNGEEEGHT. Over residues 149-160 the composition is skewed to polar residues; the sequence is SKVTLPTVSNYT. Asn-158 is a glycosylation site (N-linked (GlcNAc...) asparagine). Basic and acidic residues predominate over residues 162–178; that stretch reads RDAEDTDNGKQEDGKPN. 4 N-linked (GlcNAc...) asparagine glycosylation sites follow: Asn-229, Asn-382, Asn-450, and Asn-485.

The protein belongs to the glycosyltransferase 61 family.

Its subcellular location is the golgi apparatus membrane. It participates in glycan metabolism. Its function is as follows. Glycosyltransferase involved in the arabinosylation of xylan, the major hemicellulose (non-cellulosic component) of primary and secondary walls of angiosperms. Possesses alpha-1,3-arabinosyltransferase activity, transferring an arabinofuranose residue to the xylan backbone. The polypeptide is Alpha-1,3-arabinosyltransferase XAT2 (Oryza sativa subsp. japonica (Rice)).